The primary structure comprises 178 residues: CASP-like protein 2A2 (178 aa).

Topologically, residues 1 to 22 are cytoplasmic; the sequence is MDKTDQTAIDGSALELNRTEKT. Residues 23-43 form a helical membrane-spanning segment; the sequence is VEAVLRVASMALSITGLVIMI. Residues 44 to 69 lie on the Extracellular side of the membrane; it reads KNSISNDFGSLSYSNLGAFMYLVGAN. Residues 70–90 form a helical membrane-spanning segment; it reads GVCAAYSLLSALAILALPCPI. The Cytoplasmic segment spans residues 91–96; that stretch reads SKVQVR. The chain crosses the membrane as a helical span at residues 97–117; that stretch reads TLFLLDQVVTYVVLAAGAVSA. At 118–145 the chain is on the extracellular side; the sequence is ETVYLAYYGNIPITWSSACDSYGIFCHK. A helical transmembrane segment spans residues 146–166; the sequence is ALISVVFTFVVSLLYMLLSLI. At 167-178 the chain is on the cytoplasmic side; sequence SSYRLFSRFEAP.

This sequence belongs to the Casparian strip membrane proteins (CASP) family. In terms of assembly, homodimer and heterodimers.

It is found in the cell membrane. The chain is CASP-like protein 2A2 from Arabidopsis lyrata subsp. lyrata (Lyre-leaved rock-cress).